Here is a 160-residue protein sequence, read N- to C-terminus: Nucleotide-binding protein Noc_2254 (160 aa).

It belongs to the YajQ family.

Functionally, nucleotide-binding protein. The protein is Nucleotide-binding protein Noc_2254 of Nitrosococcus oceani (strain ATCC 19707 / BCRC 17464 / JCM 30415 / NCIMB 11848 / C-107).